Here is a 196-residue protein sequence, read N- to C-terminus: ATP-dependent Clp protease proteolytic subunit 1 (196 aa).

The Nucleophile role is filled by Ser-96. Residue His-121 is part of the active site.

The protein belongs to the peptidase S14 family. Fourteen ClpP subunits assemble into 2 heptameric rings which stack back to back to give a disk-like structure with a central cavity, resembling the structure of eukaryotic proteasomes.

It is found in the cytoplasm. It carries out the reaction Hydrolysis of proteins to small peptides in the presence of ATP and magnesium. alpha-casein is the usual test substrate. In the absence of ATP, only oligopeptides shorter than five residues are hydrolyzed (such as succinyl-Leu-Tyr-|-NHMec, and Leu-Tyr-Leu-|-Tyr-Trp, in which cleavage of the -Tyr-|-Leu- and -Tyr-|-Trp bonds also occurs).. Cleaves peptides in various proteins in a process that requires ATP hydrolysis. Has a chymotrypsin-like activity. Plays a major role in the degradation of misfolded proteins. The polypeptide is ATP-dependent Clp protease proteolytic subunit 1 (Prochlorococcus marinus (strain SARG / CCMP1375 / SS120)).